Here is an 85-residue protein sequence, read N- to C-terminus: Glutaredoxin (85 aa).

In terms of domain architecture, Glutaredoxin spans 1–85 (MQTVTMYTGP…EGGLDGLLNP (85 aa)). The cysteines at positions 12 and 15 are disulfide-linked.

This sequence belongs to the glutaredoxin family. In terms of assembly, monomer.

It is found in the cytoplasm. Has a glutathione-disulfide oxidoreductase activity in the presence of NADPH and glutathione reductase. Reduces low molecular weight disulfides and proteins. The sequence is that of Glutaredoxin (grx) from Neisseria meningitidis serogroup B (strain ATCC BAA-335 / MC58).